The following is a 249-amino-acid chain: Triosephosphate isomerase (249 aa).

9-11 (NWK) contributes to the substrate binding site. Residue His95 is the Electrophile of the active site. Glu167 acts as the Proton acceptor in catalysis. Residues Gly173, Ser213, and 234 to 235 (GG) contribute to the substrate site.

It belongs to the triosephosphate isomerase family. Homodimer.

The protein localises to the cytoplasm. The catalysed reaction is D-glyceraldehyde 3-phosphate = dihydroxyacetone phosphate. The protein operates within carbohydrate biosynthesis; gluconeogenesis. It participates in carbohydrate degradation; glycolysis; D-glyceraldehyde 3-phosphate from glycerone phosphate: step 1/1. Its function is as follows. Involved in the gluconeogenesis. Catalyzes stereospecifically the conversion of dihydroxyacetone phosphate (DHAP) to D-glyceraldehyde-3-phosphate (G3P). The sequence is that of Triosephosphate isomerase from Dictyoglomus turgidum (strain DSM 6724 / Z-1310).